Consider the following 572-residue polypeptide: Hexokinase (572 aa).

A Hexokinase domain is found at 49–492 (DEPPISLETV…SGKGAALITA (444 aa)). A hexokinase small subdomain region spans residues 105–237 (NGTEEGRFIA…DIKVEVVALI (133 aa)). D-glucose 6-phosphate-binding positions include 116 to 120 (DLGGT) and S185. An ATP-binding site is contributed by 116 to 121 (DLGGTN). Substrate is bound by residues 185-186 (SY), 202-203 (TK), and 238-239 (ND). The hexokinase large subdomain stretch occupies residues 238–481 (NDTVGTMVAA…LKFKLLQTAD (244 aa)). The D-glucose 6-phosphate site is built by D239 and T263. T263 is an ATP binding site. Substrate contacts are provided by N266, E297, and D331. ATP-binding positions include 336-337 (GK), 373-377 (TKYIS), and 448-452 (STYKY). D-glucose 6-phosphate-binding positions include 446–448 (DGS) and S483.

The protein belongs to the hexokinase family.

It carries out the reaction a D-hexose + ATP = a D-hexose 6-phosphate + ADP + H(+). The enzyme catalyses D-mannose + ATP = D-mannose 6-phosphate + ADP + H(+). The catalysed reaction is D-fructose + ATP = D-fructose 6-phosphate + ADP + H(+). It catalyses the reaction D-glucose + ATP = D-glucose 6-phosphate + ADP + H(+). It participates in carbohydrate metabolism; hexose metabolism. It functions in the pathway carbohydrate degradation; glycolysis; D-glyceraldehyde 3-phosphate and glycerone phosphate from D-glucose: step 1/4. Activated by glucose-6-phosphate. Inhibited by N-acetylglucosamine, glucosamine, mannoheptulose and ADP. Active against glucose, fructose, mannose, maltose and galactose. The protein is Hexokinase of Brugia malayi (Filarial nematode worm).